The sequence spans 215 residues: Casparian strip membrane protein 3 (215 aa).

Residues 1–26 (MDSEKTGEAKITIQEPKAADPKGKGI) are disordered. Residues 1-55 (MDSEKTGEAKITIQEPKAADPKGKGIADAPPPPVVVTTAKAIQKLPRGGWKKGVA) are Cytoplasmic-facing. Residues 56–76 (IFDFVVRLCAIATGLAATGIM) form a helical membrane-spanning segment. Over 77-101 (GTTEQTLPFFTQFFQFHAEYNDLPT) the chain is Extracellular. A helical transmembrane segment spans residues 102–122 (FMFFVFANGIASGYLILSLPF). The Cytoplasmic segment spans residues 123-136 (SIVCIVRPLAIVPR). The helical transmembrane segment at 137 to 157 (LLLIIFDTVVMALTIAAASAA) threads the bilayer. The Extracellular portion of the chain corresponds to 158–189 (AAIVYLAHNGNSNANWNAICQQFNDFCQQTST). A helical membrane pass occupies residues 190 to 210 (AVVASFITAAMLTFLIVLSAF). Over 211-215 (ALKRN) the chain is Cytoplasmic.

The protein belongs to the Casparian strip membrane proteins (CASP) family. As to quaternary structure, homodimer and heterodimers.

It is found in the cell membrane. Its function is as follows. Regulates membrane-cell wall junctions and localized cell wall deposition. Required for establishment of the Casparian strip membrane domain (CSD) and the subsequent formation of Casparian strips, a cell wall modification of the root endodermis that determines an apoplastic barrier between the intraorganismal apoplasm and the extraorganismal apoplasm and prevents lateral diffusion. This chain is Casparian strip membrane protein 3, found in Ricinus communis (Castor bean).